Reading from the N-terminus, the 490-residue chain is Endo-1,6-beta-D-glucanase BGN16.3 (490 aa).

The first 28 residues, Met1 to Arg28, serve as a signal peptide directing secretion. Catalysis depends on Glu243, which acts as the Proton donor. Glu339 acts as the Nucleophile in catalysis.

Belongs to the glycosyl hydrolase 30 family.

It localises to the secreted. The protein localises to the extracellular space. The catalysed reaction is Random hydrolysis of (1-&gt;6)-linkages in (1-&gt;6)-beta-D-glucans.. Has highest activity on the linear beta-1,6-glucan pustulan. Lower activity against yeast glucan and laminarin (beta-1,3-glucans with beta-1,6-branches). No activity on colloidal chitin, pachyman, starch, cellulose, nigeran, dextran or gentobiose. This is Endo-1,6-beta-D-glucanase BGN16.3 from Trichoderma harzianum (Hypocrea lixii).